We begin with the raw amino-acid sequence, 383 residues long: Chaperone protein DnaJ (383 aa).

In terms of domain architecture, J spans 5-70; sequence DYYELLGVEK…QKRAAYDRFG (66 aa). The CR-type zinc finger occupies 137–215; sequence GKTATVKVPS…CGGSGRTRKE (79 aa). Zn(2+) contacts are provided by Cys-150, Cys-153, Cys-167, Cys-170, Cys-189, Cys-192, Cys-203, and Cys-206. CXXCXGXG motif repeat units follow at residues 150 to 157, 167 to 174, 189 to 196, and 203 to 210; these read CEDCKGTG, CSACHGHG, CPTCQGMG, and CRSCGGSG.

This sequence belongs to the DnaJ family. Homodimer. It depends on Zn(2+) as a cofactor.

The protein localises to the cytoplasm. In terms of biological role, participates actively in the response to hyperosmotic and heat shock by preventing the aggregation of stress-denatured proteins and by disaggregating proteins, also in an autonomous, DnaK-independent fashion. Unfolded proteins bind initially to DnaJ; upon interaction with the DnaJ-bound protein, DnaK hydrolyzes its bound ATP, resulting in the formation of a stable complex. GrpE releases ADP from DnaK; ATP binding to DnaK triggers the release of the substrate protein, thus completing the reaction cycle. Several rounds of ATP-dependent interactions between DnaJ, DnaK and GrpE are required for fully efficient folding. Also involved, together with DnaK and GrpE, in the DNA replication of plasmids through activation of initiation proteins. This is Chaperone protein DnaJ from Paramagnetospirillum magneticum (strain ATCC 700264 / AMB-1) (Magnetospirillum magneticum).